The sequence spans 87 residues: Toxin Cll5b (87 aa).

The first 19 residues, Met-1–Ala-19, serve as a signal peptide directing secretion. Residues Lys-20–Ser-85 form the LCN-type CS-alpha/beta domain. Intrachain disulfides connect Cys-31–Cys-84, Cys-35–Cys-60, Cys-44–Cys-65, and Cys-48–Cys-67. A propeptide spans Lys-86–Lys-87 (removed by a carboxypeptidase).

Belongs to the long (4 C-C) scorpion toxin superfamily. Sodium channel inhibitor family. Beta subfamily. As to expression, expressed by the venom gland.

The protein resides in the secreted. In terms of biological role, beta toxins bind voltage-independently at site-4 of sodium channels (Nav) and shift the voltage of activation toward more negative potentials thereby affecting sodium channel activation and promoting spontaneous and repetitive firing. The polypeptide is Toxin Cll5b (Centruroides limpidus (Mexican scorpion)).